Here is a 206-residue protein sequence, read N- to C-terminus: Probable N-acetyltransferase 14 (206 aa).

Residues L55 to L206 form the N-acetyltransferase domain. Residues F57–V77 form a helical membrane-spanning segment.

Belongs to the camello family.

It localises to the membrane. Its function is as follows. Probable acetyltransferase. May act as a transcription factor regulating the expression of coproporphyrinogen oxidase by binding to a promoter regulatory element. The sequence is that of Probable N-acetyltransferase 14 (NAT14) from Macaca fascicularis (Crab-eating macaque).